We begin with the raw amino-acid sequence, 309 residues long: Methionyl-tRNA formyltransferase (309 aa).

109 to 112 (SLLP) contacts (6S)-5,6,7,8-tetrahydrofolate.

This sequence belongs to the Fmt family.

The enzyme catalyses L-methionyl-tRNA(fMet) + (6R)-10-formyltetrahydrofolate = N-formyl-L-methionyl-tRNA(fMet) + (6S)-5,6,7,8-tetrahydrofolate + H(+). Functionally, attaches a formyl group to the free amino group of methionyl-tRNA(fMet). The formyl group appears to play a dual role in the initiator identity of N-formylmethionyl-tRNA by promoting its recognition by IF2 and preventing the misappropriation of this tRNA by the elongation apparatus. This is Methionyl-tRNA formyltransferase from Clostridium botulinum (strain Alaska E43 / Type E3).